A 219-amino-acid polypeptide reads, in one-letter code: Cytidylate kinase (219 aa).

21–29 (GPAASGKGT) is a binding site for ATP.

It belongs to the cytidylate kinase family. Type 1 subfamily.

The protein resides in the cytoplasm. The enzyme catalyses CMP + ATP = CDP + ADP. It carries out the reaction dCMP + ATP = dCDP + ADP. In Rickettsia typhi (strain ATCC VR-144 / Wilmington), this protein is Cytidylate kinase.